Reading from the N-terminus, the 215-residue chain is Cytochrome b6 (215 aa).

Residues I32–F52 traverse the membrane as a helical segment. C35 provides a ligand contact to heme c. Heme b contacts are provided by H86 and H100. The next 3 membrane-spanning stretches (helical) occupy residues A90–F110, S116–Y136, and L186–I206. Heme b-binding residues include H187 and H202.

Belongs to the cytochrome b family. PetB subfamily. As to quaternary structure, the 4 large subunits of the cytochrome b6-f complex are cytochrome b6, subunit IV (17 kDa polypeptide, PetD), cytochrome f and the Rieske protein, while the 4 small subunits are PetG, PetL, PetM and PetN. The complex functions as a dimer. Requires heme b as cofactor. Heme c is required as a cofactor.

The protein localises to the plastid. It is found in the chloroplast thylakoid membrane. Its function is as follows. Component of the cytochrome b6-f complex, which mediates electron transfer between photosystem II (PSII) and photosystem I (PSI), cyclic electron flow around PSI, and state transitions. The chain is Cytochrome b6 from Tetradesmus obliquus (Green alga).